A 780-amino-acid chain; its full sequence is Kojibiose phosphorylase (780 aa).

Trp354–Asp355 is a binding site for substrate. The active-site Proton donor is Glu496. Residue Lys608–Gln609 participates in substrate binding.

The protein belongs to the glycosyl hydrolase 65 family.

It catalyses the reaction kojibiose + phosphate = beta-D-glucose 1-phosphate + D-glucose. In terms of biological role, catalyzes the reversible phosphorolysis of kojibiose into beta-D-glucose 1-phosphate (Glc1P) and D-glucose. In the reverse direction, uses Glc1P as acceptor to produce alpha-1,2-glucans up to a degree of polymerization of 6. The chain is Kojibiose phosphorylase from Halothermothrix orenii (strain H 168 / OCM 544 / DSM 9562).